Here is a 176-residue protein sequence, read N- to C-terminus: RNA pyrophosphohydrolase (176 aa).

Residues 6 to 149 (GYRPNVGIVI…KRDVYRRVMK (144 aa)) form the Nudix hydrolase domain. The Nudix box motif lies at 38 to 59 (GGINPGESAEQAMYRELFEEVG).

The protein belongs to the Nudix hydrolase family. RppH subfamily. The cofactor is a divalent metal cation.

In terms of biological role, accelerates the degradation of transcripts by removing pyrophosphate from the 5'-end of triphosphorylated RNA, leading to a more labile monophosphorylated state that can stimulate subsequent ribonuclease cleavage. The polypeptide is RNA pyrophosphohydrolase (Shigella boydii serotype 4 (strain Sb227)).